Reading from the N-terminus, the 162-residue chain is 6,7-dimethyl-8-ribityllumazine synthase (162 aa).

5-amino-6-(D-ribitylamino)uracil is bound by residues Tyr-27, 58-60 (ALE), and 87-89 (CVI). Residue 92-93 (ET) participates in (2S)-2-hydroxy-3-oxobutyl phosphate binding. His-95 serves as the catalytic Proton donor. Residue Asn-120 coordinates 5-amino-6-(D-ribitylamino)uracil. Position 134 (Arg-134) interacts with (2S)-2-hydroxy-3-oxobutyl phosphate.

It belongs to the DMRL synthase family.

The enzyme catalyses (2S)-2-hydroxy-3-oxobutyl phosphate + 5-amino-6-(D-ribitylamino)uracil = 6,7-dimethyl-8-(1-D-ribityl)lumazine + phosphate + 2 H2O + H(+). The protein operates within cofactor biosynthesis; riboflavin biosynthesis; riboflavin from 2-hydroxy-3-oxobutyl phosphate and 5-amino-6-(D-ribitylamino)uracil: step 1/2. Functionally, catalyzes the formation of 6,7-dimethyl-8-ribityllumazine by condensation of 5-amino-6-(D-ribitylamino)uracil with 3,4-dihydroxy-2-butanone 4-phosphate. This is the penultimate step in the biosynthesis of riboflavin. In Azorhizobium caulinodans (strain ATCC 43989 / DSM 5975 / JCM 20966 / LMG 6465 / NBRC 14845 / NCIMB 13405 / ORS 571), this protein is 6,7-dimethyl-8-ribityllumazine synthase.